A 91-amino-acid polypeptide reads, in one-letter code: Progonadoliberin-1 (91 aa).

An N-terminal signal peptide occupies residues 1–21 (MVVKTWMPWLLVSSVLSQGCC). A Pyrrolidone carboxylic acid modification is found at Gln22. Glycine amide is present on Gly31.

It belongs to the GnRH family. In terms of tissue distribution, expressed in the cell bodies of a cluster of neurons in the preoptic region.

Its subcellular location is the secreted. Its function is as follows. Stimulates the secretion of gonadotropins. The chain is Progonadoliberin-1 (gnrh1) from Oryzias latipes (Japanese rice fish).